Consider the following 217-residue polypeptide: ATP synthase subunit a (217 aa).

A run of 6 helical transmembrane segments spans residues 5-25 (EHVITSIVAMVVALGVVLAAG), 63-83 (LIASIGLFVFFGNVMELLPFV), 89-109 (NINTTLALTLIVFFLYHFEGF), 120-140 (FMGPIKALAPFFFIIEIMSHL), 157-177 (GAILLISIIGVLIGNPFTLAV), and 191-213 (LAIVLQAFIFMILSTIYIAGAVV).

The protein belongs to the ATPase A chain family. F-type ATPases have 2 components, CF(1) - the catalytic core - and CF(0) - the membrane proton channel. CF(1) has five subunits: alpha(3), beta(3), gamma(1), delta(1), epsilon(1). CF(0) has three main subunits: a(1), b(2) and c(9-12). The alpha and beta chains form an alternating ring which encloses part of the gamma chain. CF(1) is attached to CF(0) by a central stalk formed by the gamma and epsilon chains, while a peripheral stalk is formed by the delta and b chains.

The protein resides in the cell inner membrane. In terms of biological role, key component of the proton channel; it plays a direct role in the translocation of protons across the membrane. This is ATP synthase subunit a from Hydrogenobaculum sp. (strain Y04AAS1).